Here is a 254-residue protein sequence, read N- to C-terminus: Imidazole glycerol phosphate synthase subunit HisF (254 aa).

Active-site residues include Asp-11 and Asp-130.

The protein belongs to the HisA/HisF family. As to quaternary structure, heterodimer of HisH and HisF.

It is found in the cytoplasm. It catalyses the reaction 5-[(5-phospho-1-deoxy-D-ribulos-1-ylimino)methylamino]-1-(5-phospho-beta-D-ribosyl)imidazole-4-carboxamide + L-glutamine = D-erythro-1-(imidazol-4-yl)glycerol 3-phosphate + 5-amino-1-(5-phospho-beta-D-ribosyl)imidazole-4-carboxamide + L-glutamate + H(+). It participates in amino-acid biosynthesis; L-histidine biosynthesis; L-histidine from 5-phospho-alpha-D-ribose 1-diphosphate: step 5/9. IGPS catalyzes the conversion of PRFAR and glutamine to IGP, AICAR and glutamate. The HisF subunit catalyzes the cyclization activity that produces IGP and AICAR from PRFAR using the ammonia provided by the HisH subunit. The polypeptide is Imidazole glycerol phosphate synthase subunit HisF (Staphylococcus carnosus (strain TM300)).